The primary structure comprises 303 residues: D-alanine--D-alanine ligase (303 aa).

One can recognise an ATP-grasp domain in the interval 99–293 (TYRFLKDIVE…FEELVEIILK (195 aa)). Residue 125–176 (GYPCVVKPRREGSSIGVFICESDEEFQHALKEDLPRYGSVIVQKYIPGREMT) participates in ATP binding. Mg(2+) is bound by residues D248, E260, and N262.

Belongs to the D-alanine--D-alanine ligase family. It depends on Mg(2+) as a cofactor. Requires Mn(2+) as cofactor.

The protein resides in the cytoplasm. The enzyme catalyses 2 D-alanine + ATP = D-alanyl-D-alanine + ADP + phosphate + H(+). It functions in the pathway cell wall biogenesis; peptidoglycan biosynthesis. In terms of biological role, cell wall formation. This is D-alanine--D-alanine ligase from Thermotoga petrophila (strain ATCC BAA-488 / DSM 13995 / JCM 10881 / RKU-1).